The primary structure comprises 522 residues: DNA damage-binding protein CMR1 (522 aa).

Residues 38–100 (AGVLEKSRAP…DNQLLKMGSP (63 aa)) are disordered. The segment covering 54–63 (TTNTRATKSA) has biased composition (polar residues). At S64 the chain carries Phosphoserine. T69 carries the phosphothreonine modification. The span at 75-84 (LRGESADDVK) shows a compositional bias: basic and acidic residues. WD repeat units lie at residues 183–224 (ITYE…LADS), 239–281 (LFTK…EVLT), 287–327 (DDSL…SEYN), 331–371 (LADK…KKPE), 388–427 (DSRL…HLSA), 442–481 (GRWT…LAHL), and 482–521 (PTAT…IKQE). The residue at position 224 (S224) is a Phosphoserine.

This sequence belongs to the WD repeat DDB2/WDR76 family.

It localises to the cytoplasm. The protein localises to the nucleus. DNA-binding protein that binds to both single- and double-stranded DNA. Binds preferentially to UV-damaged DNA in vitro. May be involved in DNA-metabolic processes. The protein is DNA damage-binding protein CMR1 of Saccharomyces cerevisiae (strain ATCC 204508 / S288c) (Baker's yeast).